The following is a 216-amino-acid chain: Ribosomal RNA small subunit methyltransferase G (216 aa).

S-adenosyl-L-methionine-binding positions include Gly-83, Met-88, Val-134 to Glu-135, and Arg-149.

Belongs to the methyltransferase superfamily. RNA methyltransferase RsmG family.

Its subcellular location is the cytoplasm. It catalyses the reaction guanosine(527) in 16S rRNA + S-adenosyl-L-methionine = N(7)-methylguanosine(527) in 16S rRNA + S-adenosyl-L-homocysteine. In terms of biological role, specifically methylates the N7 position of guanine in position 527 of 16S rRNA. This is Ribosomal RNA small subunit methyltransferase G from Pseudomonas putida (strain ATCC 700007 / DSM 6899 / JCM 31910 / BCRC 17059 / LMG 24140 / F1).